The following is a 342-amino-acid chain: Aquaporin-7 (342 aa).

Over Met1 to Glu36 the chain is Cytoplasmic. Residue Ser20 is modified to Phosphoserine. Residues Phe37–Ser54 traverse the membrane as a helical segment. The Extracellular segment spans residues Val55 to Tyr67. The chain crosses the membrane as a helical span at residues Leu68–Ala85. Residues Gly86–Ser89 lie on the Cytoplasmic side of the membrane. Residues Gly90 to Ala103 constitute an intramembrane region (discontinuously helical). The short motif at Asn94–Ala96 is the NPA 1 element. The Cytoplasmic segment spans residues Leu104–Lys111. A helical membrane pass occupies residues Phe112–Thr132. Residues Leu133 to Thr167 lie on the Extracellular side of the membrane. Residues Leu168–Ala188 traverse the membrane as a helical segment. Residues Ile189 to Gly200 are Cytoplasmic-facing. A helical transmembrane segment spans residues Thr201–Leu217. The Extracellular portion of the chain corresponds to Gly218–Thr221. The segment at residues Gly222 to Val235 is an intramembrane region (discontinuously helical). The NPA 2 signature appears at Asn226–Ser228. At Phe236–Trp253 the chain is on the extracellular side. Residues Trp254–Phe275 form a helical membrane-spanning segment. At Ile276–Phe342 the chain is on the cytoplasmic side.

This sequence belongs to the MIP/aquaporin (TC 1.A.8) family. Homotetramer; each monomer provides an independent glycerol/water pore. Two homotetramers on opposing membranes can dimerize, forming a cell-cell junction. Interacts with PLIN1. In terms of processing, phosphorylation by PKA could prevent the interaction with PLIN1.

Its subcellular location is the cell membrane. The protein resides in the cytoplasmic vesicle membrane. It is found in the lipid droplet. It carries out the reaction glycerol(in) = glycerol(out). The enzyme catalyses H2O(in) = H2O(out). It catalyses the reaction urea(in) = urea(out). With respect to regulation, glycerol transport is regulated by pH, with the porin being permeable to glycerol at pH 7.4 but not at pH 5.5. Water permeability, however, is not influenced by pH. In terms of biological role, aquaglyceroporins form homotetrameric transmembrane channels, with each monomer independently mediating glycerol and water transport across the plasma membrane along their osmotic gradient. Could also be permeable to urea. Mediates the efflux of glycerol, formed upon triglyceride hydrolysis, to avoid its accumulation in adipocytes and to make it available to other tissues. In the kidney, mediates the reabsorption of glycerol, preventing its loss in urine, again participating to energy homeostasis. In pancreatic beta cells, it also mediates the efflux of glycerol, regulating its intracellular levels. This is Aquaporin-7 (AQP7) from Macaca fascicularis (Crab-eating macaque).